A 436-amino-acid chain; its full sequence is 3-oxo-tetronate kinase (436 aa).

Residues serine 272, 372–375 (GGET), and glycine 415 contribute to the ATP site.

The protein belongs to the four-carbon acid sugar kinase family.

The catalysed reaction is 3-dehydro-L-erythronate + ATP = 3-dehydro-4-O-phospho-L-erythronate + ADP + H(+). It carries out the reaction 3-dehydro-D-erythronate + ATP = 3-dehydro-4-O-phospho-D-erythronate + ADP + H(+). In terms of biological role, catalyzes the ATP-dependent phosphorylation of 3-oxo-tetronate to 3-oxo-tetronate 4-phosphate. The sequence is that of 3-oxo-tetronate kinase from Brucella melitensis biotype 1 (strain ATCC 23456 / CCUG 17765 / NCTC 10094 / 16M).